We begin with the raw amino-acid sequence, 254 residues long: Ribosomal protein L11 methyltransferase (254 aa).

Residues Thr107, Gly128, Asp149, Ser175, and Asn191 each coordinate S-adenosyl-L-methionine.

It belongs to the methyltransferase superfamily. PrmA family.

It is found in the cytoplasm. It carries out the reaction L-lysyl-[protein] + 3 S-adenosyl-L-methionine = N(6),N(6),N(6)-trimethyl-L-lysyl-[protein] + 3 S-adenosyl-L-homocysteine + 3 H(+). The catalysed reaction is an N-terminal L-alpha-aminoacyl-[protein] + 3 S-adenosyl-L-methionine = an N-terminal trimethyl-L-alpha-aminoacyl-[protein] + 3 S-adenosyl-L-homocysteine + 3 H(+). Methylates ribosomal protein L11. Preferentially recognizes free L11 before its incorporation into 50S subunits. This function is dispensable for growth and thermostability. In Thermus thermophilus (strain ATCC 27634 / DSM 579 / HB8), this protein is Ribosomal protein L11 methyltransferase.